Reading from the N-terminus, the 114-residue chain is Gene 37 protein (114 aa).

This is Gene 37 protein (37) from Mycobacterium (Mycobacteriophage L5).